The following is a 1131-amino-acid chain: Probable secreted beta-glucosidase adg3 (1131 aa).

The first 23 residues, 1–23 (MPSKIEKICLLLLGFTAASNVNA), serve as a signal peptide directing secretion. Residues Asn58, Asn123, Asn252, Asn551, Asn593, Asn631, and Asn689 are each glycosylated (N-linked (GlcNAc...) asparagine). A disordered region spans residues 609–819 (GTTSSTSEIV…SSPISSNSVT (211 aa)). Positions 623 to 715 (SNSNTGSLNG…YSDPTTTITS (93 aa)) are enriched in low complexity. A compositionally biased stretch (polar residues) spans 716–725 (EVSSILSSPT). Residues 726-737 (SMQSSVSRPQSS) are compositionally biased toward low complexity. The segment covering 738 to 763 (GDASGFNTIFTSISQSSDGETSGYTI) has biased composition (polar residues). Composition is skewed to low complexity over residues 764–773 (SSNSSQNSAS) and 780–819 (TSSS…NSVT). N-linked (GlcNAc...) asparagine glycans are attached at residues Asn766, Asn806, and Asn857. Low complexity predominate over residues 893-909 (STSNSGSTSYSIPSSSS). The disordered stretch occupies residues 893–918 (STSNSGSTSYSIPSSSSRNEGTTSYS). Asn920 carries N-linked (GlcNAc...) asparagine glycosylation. The segment covering 977 to 1027 (LTVKPESSLSSSTTSGLTSSSSTIPSSTRSESNSESASTSSASKRSSSSTS) has biased composition (low complexity). Positions 977–1031 (LTVKPESSLSSSTTSGLTSSSSTIPSSTRSESNSESASTSSASKRSSSSTSLVQS) are disordered.

This sequence belongs to the SUN family.

The protein resides in the secreted. In terms of biological role, cell surface beta-glucosidase involved in cell wall biogenesis,. This chain is Probable secreted beta-glucosidase adg3 (adg3), found in Schizosaccharomyces pombe (strain 972 / ATCC 24843) (Fission yeast).